Consider the following 171-residue polypeptide: ATP synthase subunit b (171 aa).

A helical transmembrane segment spans residues 14–34 (LGDMLFIGISFIVLMALISVV). Positions 56-97 (SAQKSRQEASDLADQRRDALSHSRAEASEIVADAKKSGEKQR) are enriched in basic and acidic residues. The disordered stretch occupies residues 56–104 (SAQKSRQEASDLADQRRDALSHSRAEASEIVADAKKSGEKQRSSIVADA).

The protein belongs to the ATPase B chain family. As to quaternary structure, F-type ATPases have 2 components, F(1) - the catalytic core - and F(0) - the membrane proton channel. F(1) has five subunits: alpha(3), beta(3), gamma(1), delta(1), epsilon(1). F(0) has three main subunits: a(1), b(2) and c(10-14). The alpha and beta chains form an alternating ring which encloses part of the gamma chain. F(1) is attached to F(0) by a central stalk formed by the gamma and epsilon chains, while a peripheral stalk is formed by the delta and b chains.

Its subcellular location is the cell membrane. F(1)F(0) ATP synthase produces ATP from ADP in the presence of a proton or sodium gradient. F-type ATPases consist of two structural domains, F(1) containing the extramembraneous catalytic core and F(0) containing the membrane proton channel, linked together by a central stalk and a peripheral stalk. During catalysis, ATP synthesis in the catalytic domain of F(1) is coupled via a rotary mechanism of the central stalk subunits to proton translocation. Functionally, component of the F(0) channel, it forms part of the peripheral stalk, linking F(1) to F(0). The polypeptide is ATP synthase subunit b (Lactiplantibacillus plantarum (strain ATCC BAA-793 / NCIMB 8826 / WCFS1) (Lactobacillus plantarum)).